A 241-amino-acid chain; its full sequence is Cobalt transport protein CbiM (241 aa).

The signal sequence occupies residues 1 to 23; the sequence is MKKNLTFFMVIALLFTITPNVYA. The next 6 membrane-spanning stretches (helical) occupy residues 29-49, 66-86, 98-118, 121-141, 160-180, and 202-222; these read GFLP…FIII, MLLG…IPSV, LSAI…VLIF, ILLA…MGIM, VAVF…TSVQ, and IFSI…VIIF.

Belongs to the CbiM family. In terms of assembly, forms an energy-coupling factor (ECF) transporter complex composed of an ATP-binding protein (A component, CbiO), a transmembrane protein (T component, CbiQ) and 2 possible substrate-capture proteins (S components, CbiM and CbiN) of unknown stoichimetry.

It localises to the cell membrane. The protein operates within cofactor biosynthesis; adenosylcobalamin biosynthesis. In terms of biological role, part of the energy-coupling factor (ECF) transporter complex CbiMNOQ involved in cobalt import. This is Cobalt transport protein CbiM from Clostridium tetani (strain Massachusetts / E88).